Consider the following 298-residue polypeptide: ADP/ATP translocase 2 (298 aa).

Met1 is subject to N-acetylmethionine. The Mitochondrial intermembrane portion of the chain corresponds to Met1–Ser7. Position 2 is an N-acetylthreonine; in ADP/ATP translocase 2, N-terminally processed (Thr2). The stretch at Val6 to Ile98 is one Solcar 1 repeat. At Ser7 the chain carries Phosphoserine. The chain crosses the membrane as a helical span at residues Phe8–Gln37. Residue Lys23 is modified to N6-malonyllysine. The Mitochondrial matrix portion of the chain corresponds to Val38 to Asn74. At Lys43 the chain carries N6-succinyllysine. Residue Lys52 is modified to N6,N6,N6-trimethyllysine; alternate. Lys52 carries the N6,N6-dimethyllysine; alternate modification. Residue Lys52 is modified to N6-methyllysine; alternate. The chain crosses the membrane as a helical span at residues Leu75–Phe99. Positions 80 and 92 each coordinate ADP. Lys92 and Lys96 each carry N6-malonyllysine. Residues Leu100 to Phe109 are Mitochondrial intermembrane-facing. The residue at position 105 (Lys105) is an N6-acetyllysine; alternate. Lys105 carries the post-translational modification N6-succinyllysine; alternate. The chain crosses the membrane as a helical span at residues Trp110–Phe130. Solcar repeat units follow at residues Arg111–Met201 and Ile212–Phe297. Topologically, residues Val131–Asn178 are mitochondrial matrix. An N6-methyllysine; alternate modification is found at Lys147. Lys147 bears the N6-acetyllysine; alternate mark. The residue at position 147 (Lys147) is an N6-succinyllysine; alternate. The residue at position 147 (Lys147) is an N6-malonyllysine; alternate. N6-acetyllysine is present on residues Lys163 and Lys166. The helical transmembrane segment at Val179 to Lys199 threads the bilayer. The Mitochondrial intermembrane portion of the chain corresponds to Gly200–Ile210. The helical transmembrane segment at Phe211–Phe231 threads the bilayer. Residues Asp232–Gly273 are Mitochondrial matrix-facing. Arg235 contacts ADP. The segment at Arg235–Met240 is important for transport activity. The short motif at Arg235 to Met240 is the Nucleotide carrier signature motif element. At Lys268 the chain carries N6-acetyllysine; alternate. Lys268 carries the N6-succinyllysine; alternate modification. A helical membrane pass occupies residues Ala274 to Tyr291. At Asp292–Thr298 the chain is on the mitochondrial intermembrane side.

Belongs to the mitochondrial carrier (TC 2.A.29) family. In terms of assembly, monomer. Component of the MMXD complex, which includes CIAO1, ERCC2, CIAO2B, MMS19 and SLC25A5/ANT2. Interacts with AK4. Interacts with TIMM44; leading to inhibit the presequence translocase TIMM23, thereby promoting stabilization of PINK1. Trimethylated by ANTKMT at Lys-52.

The protein localises to the mitochondrion inner membrane. The protein resides in the membrane. The catalysed reaction is ADP(in) + ATP(out) = ADP(out) + ATP(in). The enzyme catalyses H(+)(in) = H(+)(out). Its activity is regulated as follows. The matrix-open state (m-state) is inhibited by the membrane-permeable bongkrekic acid (BKA). The cytoplasmic-open state (c-state) is inhibited by the membrane-impermeable toxic inhibitor carboxyatractyloside (CATR). Proton transporter activity is inhibited by ADP:ATP antiporter activity. ADP:ATP antiporter that mediates import of ADP into the mitochondrial matrix for ATP synthesis, and export of ATP out to fuel the cell. Cycles between the cytoplasmic-open state (c-state) and the matrix-open state (m-state): operates by the alternating access mechanism with a single substrate-binding site intermittently exposed to either the cytosolic (c-state) or matrix (m-state) side of the inner mitochondrial membrane. In addition to its ADP:ATP antiporter activity, also involved in mitochondrial uncoupling and mitochondrial permeability transition pore (mPTP) activity. Plays a role in mitochondrial uncoupling by acting as a proton transporter: proton transport uncouples the proton flows via the electron transport chain and ATP synthase to reduce the efficiency of ATP production and cause mitochondrial thermogenesis. Proton transporter activity is inhibited by ADP:ATP antiporter activity, suggesting that SLC25A5/ANT2 acts as a master regulator of mitochondrial energy output by maintaining a delicate balance between ATP production (ADP:ATP antiporter activity) and thermogenesis (proton transporter activity). Proton transporter activity requires free fatty acids as cofactor, but does not transport it. Probably mediates mitochondrial uncoupling in tissues that do not express UCP1. Also plays a key role in mPTP opening, a non-specific pore that enables free passage of the mitochondrial membranes to solutes of up to 1.5 kDa, and which contributes to cell death. It is however unclear if SLC25A5/ANT2 constitutes a pore-forming component of mPTP or regulates it. Acts as a regulator of mitophagy independently of ADP:ATP antiporter activity: promotes mitophagy via interaction with TIMM44, leading to inhibit the presequence translocase TIMM23, thereby promoting stabilization of PINK1. As part of the mitotic spindle-associated MMXD complex it may play a role in chromosome segregation. This chain is ADP/ATP translocase 2, found in Bos taurus (Bovine).